The sequence spans 1214 residues: Peregrin (1214 aa).

The C2H2-type zinc-finger motif lies at 21-47 (YECPVETCRKVYKSYSGIEYHLYHYDH). Disordered stretches follow at residues 43 to 87 (YHYD…SPGR) and 118 to 177 (VVSE…PKLP). Residues 58–67 (LRKHKKKGRQ) are compositionally biased toward basic residues. The interval 59–222 (RKHKKKGRQS…VEYDMDEEDY (164 aa)) is interaction with KAT6A and KAT6B. A compositionally biased stretch (low complexity) spans 74–85 (QSPSPSEVSQSP). The span at 119-130 (VSEDEEAPEEAP) shows a compositional bias: acidic residues. Serine 120 bears the Phosphoserine mark. Lysine 147 carries the post-translational modification N6-acetyllysine. Basic residues predominate over residues 148–167 (SGKHKNKEKRKDSNHHHHHN). At serine 238 the chain carries Phosphoserine. Residues 273-323 (DAVCCICNDGECQNSNVILFCDMCNLAVHQECYGVPYIPEGQWLCRRCLQS) form a PHD-type 1 zinc finger. A C2HC pre-PHD-type zinc finger spans residues 327–360 (AVDCALCPNKGGAFKQTDDGRWAHVVCALWIPEV). The segment at 384–448 (LTCYICKQRG…RKTAYCDIHT (65 aa)) adopts a PHD-type 2 zinc-finger fold. The disordered stretch occupies residues 448-489 (TPPGSARRLPALSHSEGEEDEDEEEDEGKGWSSEKVKKAKAK). Phosphoserine is present on residues serine 460 and serine 462. The segment covering 464 to 474 (GEEDEDEEEDE) has biased composition (acidic residues). Residues 501 to 821 (LAEKRAAAPV…IKKEMTALRR (321 aa)) form an interaction with MEAF6 and ING5 region. The segment at 543–1079 (YWTLKRQSRN…RGAGWLSEDE (537 aa)) is required for RUNX1 and RUNX2 transcriptional activation. N6-acetyllysine is present on lysine 580. Residues 628–732 (MQLTPFLILL…EQGGAVLRQA (105 aa)) form the Bromo domain. A disordered region spans residues 819 to 1062 (LRRKLAHQRE…VGTGRGVGHS (244 aa)). Residues 825-838 (HQRETGRDGPERHG) are compositionally biased toward basic and acidic residues. Threonine 858 is modified (phosphothreonine). Positions 858–871 (TDSAAEESSSQETS) are enriched in low complexity. A phosphoserine mark is found at serine 860, serine 917, serine 922, and serine 926. Residues 993-1021 (SLPRSSSDSESSSSSSSSAASDRTSTTPS) show a composition bias toward low complexity. Serine 1076 carries the phosphoserine modification. The 84-residue stretch at 1085-1168 (ALDLVWAKCR…RTKLVPLGVN (84 aa)) folds into the PWWP domain. At serine 1187 the chain carries Phosphoserine.

In terms of assembly, component of some HBO1 complex composed of KAT7/HBO1, MEAF6, ING5, and BRPF1. Component of the MOZ/MORF complex composed at least of ING5, KAT6A, KAT6B, MEAF6 and one of BRPF1, BRD1/BRPF2 and BRPF3. Interacts (via PHD-type zinc finger domains) with unmethylated histone H3 at 'Lys-4' (H3K4me0). Interacts with trimethylated 'Lys-36' of histone H3 (H3K36me3). Interacts with ING5; interaction directs BRPF1 to H4K4me3-enriched chromatin at the 5' of active genes. Interacts with KAT7. Post-translationally, acetylated by KAT6A. As to expression, high levels in testis.

Its subcellular location is the nucleus. The protein resides in the chromosome. It is found in the cytoplasm. Functionally, scaffold subunit of various histone acetyltransferase (HAT) complexes, such as the MOZ/MORF and HBO1 complexes, which have a histone H3 acetyltransferase activity. Plays a key role in HBO1 complex by directing KAT7/HBO1 specificity towards histone H3 'Lys-14' acetylation (H3K14ac). Some HAT complexes preferentially mediate histone H3 'Lys-23' (H3K23ac) acetylation. Positively regulates the transcription of RUNX1 and RUNX2. This chain is Peregrin, found in Homo sapiens (Human).